Reading from the N-terminus, the 242-residue chain is uncharacterized protein (242 aa).

The protein resides in the cytoplasm. Its subcellular location is the nucleus. This is an uncharacterized protein from Schizosaccharomyces pombe (strain 972 / ATCC 24843) (Fission yeast).